Here is a 504-residue protein sequence, read N- to C-terminus: Glutamate--tRNA ligase (504 aa).

The short motif at proline 27–leucine 37 is the 'HIGH' region element. The 'KMSKS' region motif lies at lysine 271–arginine 275. Lysine 274 provides a ligand contact to ATP.

Belongs to the class-I aminoacyl-tRNA synthetase family. Glutamate--tRNA ligase type 1 subfamily. In terms of assembly, monomer.

The protein localises to the cytoplasm. The catalysed reaction is tRNA(Glu) + L-glutamate + ATP = L-glutamyl-tRNA(Glu) + AMP + diphosphate. In terms of biological role, catalyzes the attachment of glutamate to tRNA(Glu) in a two-step reaction: glutamate is first activated by ATP to form Glu-AMP and then transferred to the acceptor end of tRNA(Glu). The sequence is that of Glutamate--tRNA ligase from Arthrobacter sp. (strain FB24).